The sequence spans 682 residues: Probable glycosyl transferase Gly (682 aa).

UDP contacts are provided by residues 21–26 and 112–113; these read CASFSD and DC. Mn(2+) contacts are provided by Asp112, Asp114, and His230. 230 to 236 contacts UDP; the sequence is HYLPERK.

It belongs to the glycosyltransferase 8 family. As to quaternary structure, part of the accessory SecA2/SecY2 protein translocation apparatus required to export cell wall protein GspB.

Functionally, part of the accessory SecA2/SecY2 system specifically required to export GspB, a serine-rich repeat cell wall protein encoded upstream in the same operon. In Streptococcus gordonii, this protein is Probable glycosyl transferase Gly (gly).